The chain runs to 173 residues: Nicotinamide-nucleotide adenylyltransferase (173 aa).

Belongs to the archaeal NMN adenylyltransferase family.

Its subcellular location is the cytoplasm. It carries out the reaction beta-nicotinamide D-ribonucleotide + ATP + H(+) = diphosphate + NAD(+). The protein operates within cofactor biosynthesis; NAD(+) biosynthesis; NAD(+) from nicotinamide D-ribonucleotide: step 1/1. This is Nicotinamide-nucleotide adenylyltransferase from Methanosarcina barkeri (strain Fusaro / DSM 804).